Here is a 262-residue protein sequence, read N- to C-terminus: Cyclin-dependent kinase inhibitor 1 (262 aa).

Residues 140-212 (SDVAEAGSEH…SAQQATRPKI (73 aa)) form a disordered region. Over residues 160–169 (SGRDRERRET) the composition is skewed to basic and acidic residues. Positions 198–208 (SAATASAQQAT) are enriched in low complexity.

The protein belongs to the CDI family. ICK/KRP subfamily.

This Oryza sativa subsp. indica (Rice) protein is Cyclin-dependent kinase inhibitor 1 (KRP1).